The following is a 510-amino-acid chain: MFWLGFGLLLLALSLYLLYVFERQSRIDRLTHKWPAPPALPFIGHLHILAKLVGPHPLRRATEMINEHLHDHRAKLWMGTKLYLVDCNPKDIQALCSAQQLLQKTNDYRVFENWLCEGLFTSGFEKWSHRRKIVMPAFNYTMIKQFVAVFEKQSRILLTNVAKFAESGDQIDFLQLISCFTLDTICETALGVSVGSQSSAKSEYLDAVKSILVIIDKRLKNIFYRNSFIFKRTSHYKREQELIKTLHGFTEGIIQKRIDEINQDAENRNYQSSDAELDGVKRTLCFLDTLLLSKGPDGKPLTVKDIREEVDTIIFGGFDLTATTLNFFMYNMTLHPEHQQRCREEVWSVCGKDKSEPISIEQVRQLEFLEACIKETLRMYPSGPLTARKATANCTINDFFIPKGSDVIISPIYMGRCKDFFPDPMVFKPDRWAIGAEPKIEATTFIPFMAGARSCMGQRYAMVMLKMVLAHLLRNFLFEPLGERQVKLKLNFVITLHTVEPYLCRAKNLD.

Cys455 contacts heme.

Belongs to the cytochrome P450 family. Requires heme as cofactor.

It localises to the endoplasmic reticulum membrane. The protein resides in the microsome membrane. In terms of biological role, may be involved in the metabolism of insect hormones and in the breakdown of synthetic insecticides. This Drosophila melanogaster (Fruit fly) protein is Probable cytochrome P450 312a1 (Cyp312a1).